The sequence spans 541 residues: Arginine-containing cyclodipeptide synthase avaA (541 aa).

The Conserved DDXXE motif signature appears at 428-432 (DDIAE).

The protein belongs to the arginine-containing cyclodipeptide synthase family.

It carries out the reaction L-tryptophyl-tRNA(Trp) + L-arginyl-tRNA(Arg) = cyclo(L-arginyl-L-tryptophyl) + tRNA(Trp) + tRNA(Arg) + H(+). It participates in secondary metabolite biosynthesis. Functionally, arginine-containing cyclodipeptide synthase; part of the cluster that mediates the biosynthesis of a highly modified cyclo-arginine-tryptophan dipeptide (cRW). Within the pathway, avaA acts as the scaffold-generating enzyme and is responsible for formation of the cyclo-Arg-Trp diketopiperazine (cRW) from L-arginyl-tRNA(Arg) + L-tryptophanyl-tRNA(Trp). AvaB then acts as a multifunctional flavoenzyme that is responsible for generating the cyclo-Arg-formylkynurenine DKP, which can be deformylated by avaC. AvaB then catalyzes an additional N-oxidation followed by cyclization and dehydration. The next step is an N-acetylation of the guanidine group catalyzed by the arginine N-acetyltransferase AvaD. The role of the additional enzymes identified within the ava cluster still have to be determined. This Aspergillus versicolor protein is Arginine-containing cyclodipeptide synthase avaA.